The following is a 617-amino-acid chain: UvrABC system protein C (617 aa).

The GIY-YIG domain maps to 22 to 100 (KLPGVYRFFD…IKALSPKYNI (79 aa)). Positions 209-244 (DELTRTLQHKMQTAAANLQFEEAARYRDQIQALGII) constitute a UVR domain.

This sequence belongs to the UvrC family. Interacts with UvrB in an incision complex.

It is found in the cytoplasm. In terms of biological role, the UvrABC repair system catalyzes the recognition and processing of DNA lesions. UvrC both incises the 5' and 3' sides of the lesion. The N-terminal half is responsible for the 3' incision and the C-terminal half is responsible for the 5' incision. The sequence is that of UvrABC system protein C from Neisseria gonorrhoeae (strain ATCC 700825 / FA 1090).